A 263-amino-acid chain; its full sequence is Probable septum site-determining protein MinC (263 aa).

The interval 107–159 (LPPSGARERPLDIKDSAPRKPAEEPSPSAGEARPEPAKAEEKPAEPVSRPTKV) is disordered. 2 stretches are compositionally biased toward basic and acidic residues: residues 112–129 (ARERPLDIKDSAPRKPAE) and 138–150 (ARPEPAKAEEKPA).

Belongs to the MinC family. In terms of assembly, interacts with MinD and FtsZ.

In terms of biological role, cell division inhibitor that blocks the formation of polar Z ring septums. Rapidly oscillates between the poles of the cell to destabilize FtsZ filaments that have formed before they mature into polar Z rings. Prevents FtsZ polymerization. The protein is Probable septum site-determining protein MinC of Pseudomonas aeruginosa (strain LESB58).